A 512-amino-acid chain; its full sequence is Cytochrome P450 monooxygenase cheE (512 aa).

Residues 5-27 (YFAAESSWSPYVILVLALAAMVA) traverse the membrane as a helical segment. N-linked (GlcNAc...) asparagine glycans are attached at residues N53, N124, and N168. Position 455 (C455) interacts with heme. Residues N499 and N508 are each glycosylated (N-linked (GlcNAc...) asparagine).

This sequence belongs to the cytochrome P450 family. Requires heme as cofactor.

It is found in the membrane. Its pathway is secondary metabolite biosynthesis. Functionally, cytochrome P450 monooxygenase; part of the gene cluster that mediates the biosynthesis of chaetoglobosin A which has a unique inhibitory activity against actin polymerization in mammalian cells. Chaetoglobosin A and its intermediates are involved in the morphological differentiation of C.globosum. The first step of the pathway is the synthesis of prochaetoglobosin I via condensation of one acetyl-CoA, 8 malonyl-CoA, and a L-tryptophan molecule by the PKS-NRPS hybrid synthetase cheA, followed by reduction of backbone double bond to install desired geometry by the enoyl reductase cheB. Further multiple oxidation steps performed by the cytochrome P450 monooxygenases cheE and cheG, as well as by the FAD-linked oxidoreductase cheF, lead to the formation of chaetoglobosin A. Depending on the order of action of these reductases, distinct intermediates can be identified. Within the pathway, the cytochrome P450 monooxygenase cheE catalyzes a stereospecific epoxidation on prochaetoglobosin I, cytoglobosin D, and chaetoglobosin J intermediates. The FAD-linked oxidoreductase cheF performs dehydrogenation of the C-20 hydroxyl groups in the 20-dihyrochaetoglobosin A and cytoglobosin D intermediates. Finally, the cytochrome P450 monooxygenase cheG can catalyze the stereospecific dihydroxylation of prochaetoglobosin I and prochaetoglobosin IV at C-19 and C-20, respectively. The Diels-Alderase cheD may play a role in the post-PKS-NRPS biosynthetic steps catalyzing Diels-Alder cyclization. The sequence is that of Cytochrome P450 monooxygenase cheE from Chaetomium globosum (strain ATCC 6205 / CBS 148.51 / DSM 1962 / NBRC 6347 / NRRL 1970) (Soil fungus).